Consider the following 393-residue polypeptide: Putative F-box/kelch-repeat protein At1g32430 (393 aa).

Residues 1 to 47 (MANKEKLPWDLEEEILSRVPPTSLDRFKTVCKRWNALFNDKTFINNH) form the F-box domain. Kelch repeat units follow at residues 151–199 (YMKD…NLSV) and 308–357 (WIYV…QVQF).

The polypeptide is Putative F-box/kelch-repeat protein At1g32430 (Arabidopsis thaliana (Mouse-ear cress)).